The chain runs to 104 residues: Iron-sulfur cluster assembly protein CyaY (104 aa).

This sequence belongs to the frataxin family.

Its function is as follows. Involved in iron-sulfur (Fe-S) cluster assembly. May act as a regulator of Fe-S biogenesis. This chain is Iron-sulfur cluster assembly protein CyaY, found in Aeromonas hydrophila subsp. hydrophila (strain ATCC 7966 / DSM 30187 / BCRC 13018 / CCUG 14551 / JCM 1027 / KCTC 2358 / NCIMB 9240 / NCTC 8049).